A 370-amino-acid chain; its full sequence is Phosphoserine aminotransferase (370 aa).

Methionine 1 bears the N-acetylmethionine mark. The O-phospho-L-serine site is built by histidine 44 and arginine 45. Residue lysine 51 is modified to N6-acetyllysine. Positions 79 and 107 each coordinate pyridoxal 5'-phosphate. An N6-acetyllysine modification is found at lysine 127. Positions 156, 176, and 199 each coordinate pyridoxal 5'-phosphate. Lysine 200 is subject to N6-(pyridoxal phosphate)lysine. Residues asparagine 241 and threonine 242 each coordinate pyridoxal 5'-phosphate. N6-acetyllysine is present on residues lysine 269, lysine 318, and lysine 323. Serine 331 carries the post-translational modification Phosphoserine. Lysine 333 carries the post-translational modification N6-acetyllysine. Histidine 335, arginine 336, and arginine 342 together coordinate O-phospho-L-serine.

This sequence belongs to the class-V pyridoxal-phosphate-dependent aminotransferase family. SerC subfamily. Homodimer. Pyridoxal 5'-phosphate serves as cofactor.

It carries out the reaction O-phospho-L-serine + 2-oxoglutarate = 3-phosphooxypyruvate + L-glutamate. The protein operates within amino-acid biosynthesis; L-serine biosynthesis; L-serine from 3-phospho-D-glycerate: step 2/3. In terms of biological role, involved in L-serine biosynthesis via the phosphorylated pathway, a three-step pathway converting the glycolytic intermediate 3-phospho-D-glycerate into L-serine. Catalyzes the second step, that is the pyridoxal 5'-phosphate-dependent transamination of 3-phosphohydroxypyruvate and L-glutamate to O-phosphoserine (OPS) and alpha-ketoglutarate. This Mus musculus (Mouse) protein is Phosphoserine aminotransferase.